A 530-amino-acid chain; its full sequence is Tyrosinase (530 aa).

An N-terminal signal peptide occupies residues 1–18 (MLLAALCCLLWSFRTSTG). Topologically, residues 19 to 473 (HFPRACASSK…IKPYLEQASR (455 aa)) are lumenal, melanosome. 3 N-linked (GlcNAc...) asparagine glycosylation sites follow: N86, N111, and N161. Cu cation contacts are provided by H180, H202, and H211. N-linked (GlcNAc...) asparagine glycans are attached at residues N230 and N337. Cu cation contacts are provided by H363 and H367. N371 carries N-linked (GlcNAc...) asparagine glycosylation. Residue H390 participates in Cu cation binding. The chain crosses the membrane as a helical span at residues 474–494 (IWPWLIGAAVVGCVVTAVLGG). Topologically, residues 495–530 (LTSLLCRRNRKQLHEEKQPLLMEKEDYHSLLYQTHL) are cytoplasmic.

It belongs to the tyrosinase family. Forms an OPN3-dependent complex with DCT in response to blue light in melanocytes. Requires Cu(2+) as cofactor. Post-translationally, glycosylated.

Its subcellular location is the melanosome membrane. The protein localises to the melanosome. The enzyme catalyses 2 L-dopa + O2 = 2 L-dopaquinone + 2 H2O. The catalysed reaction is L-tyrosine + O2 = L-dopaquinone + H2O. It carries out the reaction 2 5,6-dihydroxyindole-2-carboxylate + O2 = 2 indole-5,6-quinone-2-carboxylate + 2 H2O. Its function is as follows. This is a copper-containing oxidase that functions in the formation of pigments such as melanins and other polyphenolic compounds. Catalyzes the initial and rate limiting step in the cascade of reactions leading to melanin production from tyrosine. In addition to hydroxylating tyrosine to DOPA (3,4-dihydroxyphenylalanine), also catalyzes the oxidation of DOPA to DOPA-quinone, and possibly the oxidation of DHI (5,6-dihydroxyindole) to indole-5,6 quinone. This Canis lupus familiaris (Dog) protein is Tyrosinase (TYR).